We begin with the raw amino-acid sequence, 265 residues long: Small ribosomal subunit protein uS2 (265 aa).

It belongs to the universal ribosomal protein uS2 family.

This Microcystis aeruginosa (strain NIES-843 / IAM M-2473) protein is Small ribosomal subunit protein uS2.